The chain runs to 396 residues: MSERHLFTSESVSEGHPDKIADQISDSILDELLKNDPDARVACETTVTTGLVVVVGEISTTAYIDIQKVVRKTIKDIGYVGGEYGFDGENCAVIVAIDEQSPDIAQGVDDSLETREGHEDRLNQIGAGDQGLMFGYATNETEELMPLPIMLSHHLMQRIAKLRKEQVISYLRPDAKAEVTVEYDDNDHPVRVDTVVLSTQHDPDVTLEQIRQDVIEQVIKAVIPATLLDENTNFYINPTGRFVIGGPQGDAGLTGRKIIVDTYGGAARHGGGAFSGKDATKVDRSASYAARYIAKNIVAAKLAERVEVQIAYAIGVAEPVSVMVDTFGTGTVSEEKLTQAVRKIFDLRPAGIIEMLDLKRPIYKQTAAYGHFGRTDVELPWEKTDKVEALNDFFKN.

Residue His16 participates in ATP binding. Asp18 is a binding site for Mg(2+). Glu44 is a K(+) binding site. L-methionine-binding residues include Glu57 and Gln100. The tract at residues 100–110 (QSPDIAQGVDD) is flexible loop. ATP is bound by residues 174–176 (DAK), 241–242 (RF), Asp250, 256–257 (RK), Ala273, and Lys277. Residue Asp250 participates in L-methionine binding. Lys281 provides a ligand contact to L-methionine.

This sequence belongs to the AdoMet synthase family. As to quaternary structure, homotetramer; dimer of dimers. Mg(2+) is required as a cofactor. K(+) serves as cofactor.

The protein localises to the cytoplasm. It carries out the reaction L-methionine + ATP + H2O = S-adenosyl-L-methionine + phosphate + diphosphate. It participates in amino-acid biosynthesis; S-adenosyl-L-methionine biosynthesis; S-adenosyl-L-methionine from L-methionine: step 1/1. Catalyzes the formation of S-adenosylmethionine (AdoMet) from methionine and ATP. The overall synthetic reaction is composed of two sequential steps, AdoMet formation and the subsequent tripolyphosphate hydrolysis which occurs prior to release of AdoMet from the enzyme. The polypeptide is S-adenosylmethionine synthase (Pediococcus pentosaceus (strain ATCC 25745 / CCUG 21536 / LMG 10740 / 183-1w)).